The following is a 510-amino-acid chain: DNA-directed RNA polymerase I subunit RPA34 (510 aa).

M1 is modified (N-acetylmethionine). The disordered stretch occupies residues 1–31; sequence MEEPQAGDAARFSCPPNFTAKPPASESPRFS. The residue at position 27 (S27) is a Phosphoserine. Y80 is modified (phosphotyrosine). The segment at 120 to 143 is disordered; the sequence is GPQQSLSGSPLQPIPASPPPQIPP. A phosphoserine mark is found at S128, S136, S172, and S205. A compositionally biased stretch (pro residues) spans 131-143; the sequence is QPIPASPPPQIPP. The tract at residues 203 to 510 is disordered; that stretch reads LGSPEMDVRK…KRKQQQQQPV (308 aa). Over residues 258 to 270 the composition is skewed to basic and acidic residues; that stretch reads GKETFEPEDKTVK. Residue K270 forms a Glycyl lysine isopeptide (Lys-Gly) (interchain with G-Cter in SUMO1); alternate linkage. A Glycyl lysine isopeptide (Lys-Gly) (interchain with G-Cter in SUMO2); alternate cross-link involves residue K270. S285 is modified (phosphoserine). T287 is modified (phosphothreonine). S309 is subject to Phosphoserine. K314 participates in a covalent cross-link: Glycyl lysine isopeptide (Lys-Gly) (interchain with G-Cter in SUMO1); alternate. K314 participates in a covalent cross-link: Glycyl lysine isopeptide (Lys-Gly) (interchain with G-Cter in SUMO2); alternate. 2 stretches are compositionally biased toward low complexity: residues 372–382 and 394–407; these read AKPQAQAALAA and DATV…VGPE. Residues 421 to 430 show a composition bias toward basic residues; it reads TKKKKKKKER. The span at 436–452 shows a compositional bias: low complexity; that stretch reads EPIQPLEPELPGEGQPE. At S490 the chain carries Phosphoserine.

The protein belongs to the eukaryotic RPA34 RNA polymerase subunit family. In terms of assembly, component of the RNA polymerase I (Pol I) complex consisting of 13 subunits: a ten-subunit catalytic core composed of POLR1A/RPA1, POLR1B/RPA2, POLR1C/RPAC1, POLR1D/RPAC2, POLR1H/RPA12, POLR2E/RPABC1, POLR2F/RPABC2, POLR2H/RPABC3, POLR2K/RPABC4 and POLR2L/RPABC5; a mobile stalk subunit POLR1F/RPA43 protruding from the core and additional subunits homologous to general transcription factors POLR1E/RPA49 and POLR1G/RPA34. Forms a heterodimer with POLR1E/RPA49. Part of Pol I pre-initiation complex (PIC), in which Pol I core assembles with RRN3 and promoter-bound UTBF and SL1/TIF-IB complex. Interacts with TAF1A thereby associates with the SL1/TIF-IB complex. Interacts with UBTF. Interacts with POLR1E/PRAF1 through its N-terminal region. Interacts with CD3E. Undergoes tyrosine phosphorylation upon T-cell receptor (TCR) stimulation. This phosphorylation has not been confirmed by other groups. In terms of processing, phosphorylated on tyrosine residues in initiation-competent Pol I-beta complexes but not in Pol I-alpha complexes.

It is found in the nucleus. The protein resides in the nucleolus. The protein localises to the chromosome. Component of RNA polymerase I (Pol I), a DNA-dependent RNA polymerase which synthesizes ribosomal RNA precursors using the four ribonucleoside triphosphates as substrates. Involved in UBTF-activated transcription, presumably at a step following PIC formation. In terms of biological role, has been described as a component of preformed T-cell receptor (TCR) complex. This chain is DNA-directed RNA polymerase I subunit RPA34, found in Homo sapiens (Human).